A 418-amino-acid chain; its full sequence is Light-independent protochlorophyllide reductase subunit N (418 aa).

Positions 17, 42, and 103 each coordinate [4Fe-4S] cluster.

This sequence belongs to the BchN/ChlN family. As to quaternary structure, protochlorophyllide reductase is composed of three subunits; ChlL, ChlN and ChlB. Forms a heterotetramer of two ChlB and two ChlN subunits. [4Fe-4S] cluster is required as a cofactor.

It carries out the reaction chlorophyllide a + oxidized 2[4Fe-4S]-[ferredoxin] + 2 ADP + 2 phosphate = protochlorophyllide a + reduced 2[4Fe-4S]-[ferredoxin] + 2 ATP + 2 H2O. It functions in the pathway porphyrin-containing compound metabolism; chlorophyll biosynthesis (light-independent). In terms of biological role, component of the dark-operative protochlorophyllide reductase (DPOR) that uses Mg-ATP and reduced ferredoxin to reduce ring D of protochlorophyllide (Pchlide) to form chlorophyllide a (Chlide). This reaction is light-independent. The NB-protein (ChlN-ChlB) is the catalytic component of the complex. The sequence is that of Light-independent protochlorophyllide reductase subunit N from Prochlorococcus marinus (strain AS9601).